A 71-amino-acid polypeptide reads, in one-letter code: Large ribosomal subunit protein bL31 (71 aa).

Cysteine 16, cysteine 18, cysteine 37, and cysteine 40 together coordinate Zn(2+).

Belongs to the bacterial ribosomal protein bL31 family. Type A subfamily. As to quaternary structure, part of the 50S ribosomal subunit. Requires Zn(2+) as cofactor.

In terms of biological role, binds the 23S rRNA. This is Large ribosomal subunit protein bL31 from Sodalis glossinidius (strain morsitans).